The sequence spans 1044 residues: Integrin alpha-V (1044 aa).

The signal sequence occupies residues Met-1–Ala-30. The Extracellular segment spans residues Phe-31–Val-988. FG-GAP repeat units lie at residues Asn-32–Gln-98, Asp-109–Ala-170, Arg-173–Tyr-225, Gln-237–Met-291, Ser-292–Gln-357, Thr-358–Ser-415, and Gln-419–Ser-482. Asn-74 carries N-linked (GlcNAc...) asparagine glycosylation. 3 disulfide bridges follow: Cys-89/Cys-97, Cys-138/Cys-158, and Cys-172/Cys-185. Residues Asp-260, Asn-262, Asp-264, Ile-266, and Asp-268 each coordinate Ca(2+). N-linked (GlcNAc...) asparagine glycosylation is found at Asn-290 and Asn-296. Ca(2+) is bound by residues Asp-314, Asn-316, Asp-318, Tyr-320, Asp-322, Asp-379, Asp-381, Asp-383, Phe-385, Asp-387, Asp-443, Asp-445, Asn-447, Tyr-449, and Asp-451. 2 disulfides stabilise this stretch: Cys-491/Cys-502 and Cys-508/Cys-565. A glycan (N-linked (GlcNAc...) asparagine) is linked at Asn-615. Disulfide bonds link Cys-626-Cys-632 and Cys-698-Cys-711. Asn-704, Asn-835, Asn-851, and Asn-869 each carry an N-linked (GlcNAc...) asparagine glycan. 2 disulfides stabilise this stretch: Cys-852–Cys-910 and Cys-900–Cys-905. N-linked (GlcNAc...) asparagine glycans are attached at residues Asn-941, Asn-969, and Asn-976. Residues Pro-989–Tyr-1012 traverse the membrane as a helical segment. Topologically, residues Arg-1013–Thr-1044 are cytoplasmic. The GFFKR motif motif lies at Gly-1015–Arg-1019. Residues Pro-1023–Gly-1038 are compositionally biased toward basic and acidic residues. Residues Pro-1023–Thr-1044 are disordered.

The protein belongs to the integrin alpha chain family. Heterodimer of an alpha and a beta subunit. The alpha subunit is composed of a heavy and a light chain linked by a disulfide bond. Alpha-V (ITGAV) associates with either beta-1 (ITGB1), beta-3 (ITGB3), beta-5 (ITGB5), beta-6 (ITGB6) or beta-8 (ITGB8). Interacts with RAB25. Interacts with CIB1. Integrins ITGAV:ITGB3 and ITGAV:ITGB5 interact with FBLN5 (via N-terminus). ITGAV:ITGB3 and ITGAV:ITGB5 interact with CCN3. ITGAV:ITGB3 interacts with ADGRA2. ITGAV:ITGB3 interacts with FGF2; it is likely that FGF2 can simultaneously bind ITGAV:ITGB3 and FGF receptors. ITGAV:ITGB3 interacts with SELP (via C-type lectin domain); the interaction mediates cell-cell interaction and adhesion. ITGAV:ITGB3 is found in a ternary complex with CX3CR1 and CX3CL1. ITGAV:ITGB3 is found in a ternary complex with NRG1 and ERBB3. ITGAV:ITGB3 is found in a ternary complex with FGF1 and FGFR1. ITGAV:ITGB3 is found in a ternary complex with IGF1 and IGF1R. ITGAV:ITGB3 interacts with IGF2. ITGAV:ITGB3 and ITGAV:ITGB6 interact with FBN1. ITGAV:ITGB3 interacts with CD9, CD81 and CD151 (via second extracellular domain). ITGAV:ITGB6 interacts with TGFB1. ITGAV:ITGB3 interacts with PTN. Forms a complex with PTPRZ1 and PTN that stimulates endothelial cell migration through ITGB3 'Tyr-773' phosphorylation. Interacts with TM4SF19.

Its subcellular location is the cell membrane. It is found in the cell junction. It localises to the focal adhesion. Its function is as follows. The alpha-V (ITGAV) integrins are receptors for vitronectin, cytotactin, fibronectin, fibrinogen, laminin, matrix metalloproteinase-2, osteopontin, osteomodulin, prothrombin, thrombospondin, TGFB1 and vWF. They recognize the sequence R-G-D in a wide array of ligands. Alpha-V integrins may play a role in embryo implantation, angiogenesis and wound healing. ITGAV:ITGB3 binds to fractalkine (CX3CL1) and may act as its coreceptor in CX3CR1-dependent fractalkine signaling. ITGAV:ITGB3 binds to NRG1 (via EGF domain) and this binding is essential for NRG1-ERBB signaling. ITGAV:ITGB3 binds to FGF1 and this binding is essential for FGF1 signaling. ITGAV:ITGB3 binds to FGF2 and this binding is essential for FGF2 signaling. ITGAV:ITGB3 binds to IGF1 and this binding is essential for IGF1 signaling. ITGAV:ITGB3 binds to IGF2 and this binding is essential for IGF2 signaling. ITGAV:ITGB3 binds to IL1B and this binding is essential for IL1B signaling. ITGAV:ITGB3 binds to PLA2G2A via a site (site 2) which is distinct from the classical ligand-binding site (site 1) and this induces integrin conformational changes and enhanced ligand binding to site 1. ITGAV:ITGB3 and ITGAV:ITGB6 act as a receptor for fibrillin-1 (FBN1) and mediate R-G-D-dependent cell adhesion to FBN1. Integrin alpha-V/beta-6 or alpha-V/beta-8 (ITGAV:ITGB6 or ITGAV:ITGB8) mediates R-G-D-dependent release of transforming growth factor beta-1 (TGF-beta-1) from regulatory Latency-associated peptide (LAP), thereby playing a key role in TGF-beta-1 activation. ITGAV:ITGB3 acts as a receptor for CD40LG. ITGAV:ITGB3 binds to the Lilrb4a/Gp49b receptor and enhances the Lilrb4a-mediated inhibition of mast cell activation. ITGAV:ITGB3 also suppresses marginal zone B cell antibody production through its interaction with Lilrb4a. ITGAV:ITGB3 acts as a receptor for IBSP and promotes cell adhesion and migration to IBSP. This chain is Integrin alpha-V (Itgav), found in Mus musculus (Mouse).